The chain runs to 304 residues: Phosphoribosylaminoimidazole-succinocarboxamide synthase (304 aa).

Belongs to the SAICAR synthetase family.

It carries out the reaction 5-amino-1-(5-phospho-D-ribosyl)imidazole-4-carboxylate + L-aspartate + ATP = (2S)-2-[5-amino-1-(5-phospho-beta-D-ribosyl)imidazole-4-carboxamido]succinate + ADP + phosphate + 2 H(+). The protein operates within purine metabolism; IMP biosynthesis via de novo pathway; 5-amino-1-(5-phospho-D-ribosyl)imidazole-4-carboxamide from 5-amino-1-(5-phospho-D-ribosyl)imidazole-4-carboxylate: step 1/2. The polypeptide is Phosphoribosylaminoimidazole-succinocarboxamide synthase (Corynebacterium efficiens (strain DSM 44549 / YS-314 / AJ 12310 / JCM 11189 / NBRC 100395)).